Here is a 220-residue protein sequence, read N- to C-terminus: Catechol O-methyltransferase (220 aa).

S-adenosyl-L-methionine-binding positions include Val44, Glu66, Gly68–Thr69, Ser74, Glu92, and Ala121. Position 139 (Asp139) interacts with a divalent metal cation. Asp141 contacts S-adenosyl-L-methionine. A divalent metal cation is bound by residues Asp165 and Asn166.

Belongs to the class I-like SAM-binding methyltransferase superfamily. Cation-dependent O-methyltransferase family. In terms of assembly, homodimer. A divalent metal cation is required as a cofactor.

It catalyses the reaction a catechol + S-adenosyl-L-methionine = a guaiacol + S-adenosyl-L-homocysteine + H(+). With respect to regulation, inhibited by EDTA. Its function is as follows. Catechol O-methyltransferase that can use various catechol-like compounds such as gallic acid (GA), 3,4-dihydroxy-5-methoxy-benzoic acid (5OMeBA), protocatechuic acid (PCA), 3,4-dihydroxy-benzaldehyde (DHA), dopamine, caffeic acid (CA), luteolin, quercetin, and 5-hydroxyuridine. The sequence is that of Catechol O-methyltransferase from Mycobacterium tuberculosis (strain ATCC 25618 / H37Rv).